The sequence spans 321 residues: Protein ABIL3 (321 aa).

2 disordered regions span residues 179–273 and 279–298; these read TIRE…RSAS and EKEA…SKRL. Low complexity-rich tracts occupy residues 204–215 and 240–255; these read SATFSFSSIATA and IRPS…SKSR. A compositionally biased stretch (basic and acidic residues) spans 279 to 288; it reads EKEAQKEPEH.

Belongs to the ABI family. Binds SCAR.

It is found in the cytoplasm. The protein localises to the cytoskeleton. Its function is as follows. Involved in regulation of actin and microtubule organization. Part of a WAVE complex that activates the Arp2/3 complex. This is Protein ABIL3 (ABIL3) from Arabidopsis thaliana (Mouse-ear cress).